The sequence spans 168 residues: Secretory-abundant heat soluble protein 33020 (168 aa).

The N-terminal stretch at 1 to 19 is a signal peptide; that stretch reads MARFLVALALFGVVAMTAA. The segment at 26 to 57 is SAHS-c1; it reads EWSGKPWLGKFVAEVSDKSENWEAFVDALGLP. The segment at 72–100 is SAHS-c2; it reads YKQGEHYHHILSLPDKNINKDIEFTLGQE. The segment at 113 to 162 is SAHS-c3; sequence KYFEDGNKLVADVSIPAKGKSIHDVYDVQGDQLIKSYKVGDVVAKKWFKK.

Belongs to the Secretory-abundant heat soluble protein (SAHS) family.

The protein localises to the secreted. Its function is as follows. Secreted heat soluble protein acting as a molecular shield in water-deficient condition. Tardigrade-specific intrinsically disordered proteins (TDPs) are essential for desiccation tolerance by forming non-crystalline amorphous solids upon desiccation, and this vitrified state mirrors their protective capabilities. This is Secretory-abundant heat soluble protein 33020 from Hypsibius exemplaris (Freshwater tardigrade).